The following is a 260-amino-acid chain: Indole-3-glycerol phosphate synthase (260 aa).

It belongs to the TrpC family.

It carries out the reaction 1-(2-carboxyphenylamino)-1-deoxy-D-ribulose 5-phosphate + H(+) = (1S,2R)-1-C-(indol-3-yl)glycerol 3-phosphate + CO2 + H2O. Its pathway is amino-acid biosynthesis; L-tryptophan biosynthesis; L-tryptophan from chorismate: step 4/5. The sequence is that of Indole-3-glycerol phosphate synthase from Leifsonia xyli subsp. xyli (strain CTCB07).